We begin with the raw amino-acid sequence, 171 residues long: Crossover junction endodeoxyribonuclease RuvC (171 aa).

Active-site residues include Asp-7, Glu-74, and Asp-147. Asp-7, Glu-74, and Asp-147 together coordinate Mg(2+).

Belongs to the RuvC family. In terms of assembly, homodimer which binds Holliday junction (HJ) DNA. The HJ becomes 2-fold symmetrical on binding to RuvC with unstacked arms; it has a different conformation from HJ DNA in complex with RuvA. In the full resolvosome a probable DNA-RuvA(4)-RuvB(12)-RuvC(2) complex forms which resolves the HJ. Requires Mg(2+) as cofactor.

The protein localises to the cytoplasm. The enzyme catalyses Endonucleolytic cleavage at a junction such as a reciprocal single-stranded crossover between two homologous DNA duplexes (Holliday junction).. Functionally, the RuvA-RuvB-RuvC complex processes Holliday junction (HJ) DNA during genetic recombination and DNA repair. Endonuclease that resolves HJ intermediates. Cleaves cruciform DNA by making single-stranded nicks across the HJ at symmetrical positions within the homologous arms, yielding a 5'-phosphate and a 3'-hydroxyl group; requires a central core of homology in the junction. The consensus cleavage sequence is 5'-(A/T)TT(C/G)-3'. Cleavage occurs on the 3'-side of the TT dinucleotide at the point of strand exchange. HJ branch migration catalyzed by RuvA-RuvB allows RuvC to scan DNA until it finds its consensus sequence, where it cleaves and resolves the cruciform DNA. The polypeptide is Crossover junction endodeoxyribonuclease RuvC (Acidobacterium capsulatum (strain ATCC 51196 / DSM 11244 / BCRC 80197 / JCM 7670 / NBRC 15755 / NCIMB 13165 / 161)).